Here is a 290-residue protein sequence, read N- to C-terminus: GTPase Era (290 aa).

Residues 2–167 (KSGFVSIVGR…LDELVKYLPE (166 aa)) form the Era-type G domain. A G1 region spans residues 10–17 (GRTNAGKS). 10–17 (GRTNAGKS) contacts GTP. The segment at 36–40 (NATRR) is G2. The G3 stretch occupies residues 57-60 (DTPG). GTP is bound by residues 57–61 (DTPGL) and 116–119 (NKVD). Residues 116-119 (NKVD) form a G4 region. The tract at residues 146–148 (YSI) is G5. Positions 194–274 (IYENLSDEIP…MLKLFVQLEK (81 aa)) constitute a KH type-2 domain.

This sequence belongs to the TRAFAC class TrmE-Era-EngA-EngB-Septin-like GTPase superfamily. Era GTPase family. Monomer.

It localises to the cytoplasm. It is found in the cell inner membrane. In terms of biological role, an essential GTPase that binds both GDP and GTP, with rapid nucleotide exchange. Plays a role in 16S rRNA processing and 30S ribosomal subunit biogenesis and possibly also in cell cycle regulation and energy metabolism. The polypeptide is GTPase Era (Campylobacter lari (strain RM2100 / D67 / ATCC BAA-1060)).